A 559-amino-acid chain; its full sequence is Transmembrane E3 ubiquitin-protein ligase FLY2 (559 aa).

An N-terminal signal peptide occupies residues 1–29 (MNNLGNFGVWGFGFFSLSIWFAVLQQANG). Topologically, residues 30–259 (LRPIRETARS…TSINVEVYYN (230 aa)) are lumenal. A helical transmembrane segment spans residues 260 to 280 (KAVNYTLMVTFVSFLQVLLLI). At 281 to 294 (RQMEHSNTQSGAAK) the chain is on the cytoplasmic side. Residues 295–315 (VSIVMIGQQAIMDSYLCLLHL) form a helical membrane-spanning segment. Residues 316–318 (TAG) are Lumenal-facing. The chain crosses the membrane as a helical span at residues 319–339 (ILVESLFNAFATAAFFKFVVF). Residues 340–370 (SIFEMRYLLSIWKATRPSTSGEGWETMRREL) lie on the Cytoplasmic side of the membrane. The helical transmembrane segment at 371-391 (SFLYSRFYGILLGGILLMYEF) threads the bilayer. Residues 392–394 (HNY) lie on the Lumenal side of the membrane. The helical transmembrane segment at 395–415 (MRPILLLMYSFWIPQIVANVV) threads the bilayer. At 416–423 (RDSRKPLH) the chain is on the cytoplasmic side. Residues 424–444 (PYYILGMTVTRLAIPLYVFGC) traverse the membrane as a helical segment. The Lumenal segment spans residues 445 to 458 (PKNFMRVEPSKAWC). The chain crosses the membrane as a helical span at residues 459 to 479 (VSLCAFMGFQAGVLLLQHYFG). Topologically, residues 480 to 559 (SRCFVPRKLL…PTCRRPLPPA (80 aa)) are cytoplasmic. Residues 509 to 553 (CVICMTTIDLRHRINDCMVTPCEHIFHSGCLQRWMDIKMECPTCR) form an RING-type; atypical zinc finger.

In terms of tissue distribution, highly expressed in stems. Expressed in root xylem and seed coat.

The protein localises to the endomembrane system. The enzyme catalyses S-ubiquitinyl-[E2 ubiquitin-conjugating enzyme]-L-cysteine + [acceptor protein]-L-lysine = [E2 ubiquitin-conjugating enzyme]-L-cysteine + N(6)-ubiquitinyl-[acceptor protein]-L-lysine.. The protein operates within protein modification; protein ubiquitination. E3 ubiquitin-protein ligase that may be involved in xylem development. In Arabidopsis thaliana (Mouse-ear cress), this protein is Transmembrane E3 ubiquitin-protein ligase FLY2.